A 521-amino-acid polypeptide reads, in one-letter code: Cytochrome P450 1A1 (521 aa).

Residue Phe-229 participates in substrate binding. Residue Cys-463 participates in heme binding.

This sequence belongs to the cytochrome P450 family. Heme is required as a cofactor.

The protein localises to the endoplasmic reticulum membrane. It localises to the microsome membrane. The catalysed reaction is an organic molecule + reduced [NADPH--hemoprotein reductase] + O2 = an alcohol + oxidized [NADPH--hemoprotein reductase] + H2O + H(+). Its function is as follows. Cytochromes P450 are a group of heme-thiolate monooxygenases. They oxidize a variety of structurally unrelated compounds, including steroids, fatty acids, and xenobiotics. This is Cytochrome P450 1A1 (cyp1a1) from Oryzias latipes (Japanese rice fish).